A 92-amino-acid polypeptide reads, in one-letter code: Small ribosomal subunit protein uS19 (92 aa).

It belongs to the universal ribosomal protein uS19 family.

Its function is as follows. Protein S19 forms a complex with S13 that binds strongly to the 16S ribosomal RNA. The chain is Small ribosomal subunit protein uS19 from Corynebacterium diphtheriae (strain ATCC 700971 / NCTC 13129 / Biotype gravis).